The primary structure comprises 240 residues: Probable transcriptional regulatory protein MXAN_7062 (240 aa).

It belongs to the TACO1 family.

The protein localises to the cytoplasm. The sequence is that of Probable transcriptional regulatory protein MXAN_7062 from Myxococcus xanthus (strain DK1622).